A 315-amino-acid polypeptide reads, in one-letter code: MADEIGFFQLNTGAKIPSVGLGTWQAAPGVVGDAVAAAVKIGYQHIDCASRYGNEIEIGKVLKKLFDDGVVKREKLFITSKIWLTDLDPPDVQDALNRTLQDLQLDYVDLYLMHWPVRLKKGTVDFKPENIMPIDIPSTWKAMEALVDSGKARAIGVSNFSTKKLSDLVEAARVPPAVNQVECHPSWQQHKLHEFCKSKGIHLSGYSPLGSPGTTWVKADVLKSPVIEMIAKEIGKSPAQTALRWGLQMGHSILPKSTNEGRIRENFDVLGWSIPKEMFDKFSKIEQARLVQGTSFVHETLSPYKTLEELWDGEI.

The residue at position 2 (Ala2) is an N-acetylalanine. Residues 23–24 and Asp47 contribute to the NADP(+) site; that span reads TW. Tyr52 (proton donor) is an active-site residue. NADP(+)-binding positions include His114, 158–159, Gln180, 207–213, 256–258, and 262–266; these read SN, SPLGSPG, KST, and RIREN. Position 295 is a phosphoserine (Ser295).

It belongs to the aldo/keto reductase family.

Functionally, oxidoreductase that may act on a broad range of substrates such as ketosteroids, aldehydes, ketones and sugars. The protein is Aldo-keto reductase family 4 member C11 (AKR4C11) of Arabidopsis thaliana (Mouse-ear cress).